The sequence spans 437 residues: Glycogen synthase (437 aa).

An ADP-alpha-D-glucose-binding site is contributed by K15.

This sequence belongs to the glycosyltransferase 1 family. Bacterial/plant glycogen synthase subfamily.

The enzyme catalyses [(1-&gt;4)-alpha-D-glucosyl](n) + ADP-alpha-D-glucose = [(1-&gt;4)-alpha-D-glucosyl](n+1) + ADP + H(+). It participates in glycan biosynthesis; glycogen biosynthesis. Its function is as follows. Synthesizes alpha-1,4-glucan chains using ADP-glucose. This Thermus thermophilus (strain ATCC 27634 / DSM 579 / HB8) protein is Glycogen synthase.